Consider the following 533-residue polypeptide: GMP synthase [glutamine-hydrolyzing] (533 aa).

The Glutamine amidotransferase type-1 domain occupies 12–206; sequence TILVLDFGSQ…AVGICGAEQK (195 aa). Catalysis depends on Cys88, which acts as the Nucleophile. Catalysis depends on residues His180 and Glu182. One can recognise a GMPS ATP-PPase domain in the interval 207-408; it reads WTMAEFIGQE…LGISPELVGR (202 aa). 235 to 241 contacts ATP; that stretch reads SGGVDST. The XMP site is built by Arg308, Asp470, Lys525, and Glu531.

In terms of assembly, homodimer. Requires Mg(2+) as cofactor.

It localises to the cytoplasm. It is found in the cytosol. The catalysed reaction is XMP + L-glutamine + ATP + H2O = GMP + L-glutamate + AMP + diphosphate + 2 H(+). Its pathway is purine metabolism; GMP biosynthesis; GMP from XMP (L-Gln route): step 1/1. Functionally, catalyzes the conversion of xanthine monophosphate (XMP) to GMP in the presence of glutamine and ATP through an adenyl-XMP intermediate. The protein is GMP synthase [glutamine-hydrolyzing] (gua1) of Emericella nidulans (strain FGSC A4 / ATCC 38163 / CBS 112.46 / NRRL 194 / M139) (Aspergillus nidulans).